A 505-amino-acid polypeptide reads, in one-letter code: Deoxyguanosinetriphosphate triphosphohydrolase (505 aa).

Residues 66 to 273 enclose the HD domain; sequence RLTHSMEVQQ…MEAADDISYC (208 aa).

The protein belongs to the dGTPase family. Type 1 subfamily. In terms of assembly, homotetramer. Mg(2+) serves as cofactor.

The catalysed reaction is dGTP + H2O = 2'-deoxyguanosine + triphosphate + H(+). Functionally, dGTPase preferentially hydrolyzes dGTP over the other canonical NTPs. The chain is Deoxyguanosinetriphosphate triphosphohydrolase from Shigella boydii serotype 4 (strain Sb227).